We begin with the raw amino-acid sequence, 138 residues long: Cofilin (138 aa).

The ADF-H domain maps to 2-136 (SSGVQPTQEC…TKDALFEKAT (135 aa)).

Belongs to the actin-binding proteins ADF family.

It is found in the cytoplasm. The protein resides in the cytoskeleton. Its subcellular location is the nucleus matrix. Functionally, controls reversibly actin polymerization and depolymerization in a pH-sensitive manner. It has the ability to bind G- and F-actin in a 1:1 ratio of cofilin to actin. Binding to F-actin is regulated by tropomyosin. It is the major component of intranuclear and cytoplasmic actin rods. Required for accumulation of actin at the cell division site via depolymerizing actin at the cell ends. In association with myosin II has a role in the assembly of the contractile ring via severing actin filaments. Involved in the maintenance of the contractile ring once formed. In association with profilin and capping protein, has a role in the mitotic reorganization of the actin cytoskeleton. The protein is Cofilin (COF1) of Cryptococcus neoformans var. neoformans serotype D (strain B-3501A) (Filobasidiella neoformans).